A 197-amino-acid chain; its full sequence is dITP/XTP pyrophosphatase (197 aa).

Position 8-13 (8-13) interacts with substrate; the sequence is TGNPGK. Positions 40 and 69 each coordinate Mg(2+). Asp-69 acts as the Proton acceptor in catalysis. Residues Ser-70, 154–157, Lys-177, and 182–183 contribute to the substrate site; these read FGYD and HR.

This sequence belongs to the HAM1 NTPase family. In terms of assembly, homodimer. The cofactor is Mg(2+).

The enzyme catalyses XTP + H2O = XMP + diphosphate + H(+). It catalyses the reaction dITP + H2O = dIMP + diphosphate + H(+). It carries out the reaction ITP + H2O = IMP + diphosphate + H(+). Its function is as follows. Pyrophosphatase that catalyzes the hydrolysis of nucleoside triphosphates to their monophosphate derivatives, with a high preference for the non-canonical purine nucleotides XTP (xanthosine triphosphate), dITP (deoxyinosine triphosphate) and ITP. Seems to function as a house-cleaning enzyme that removes non-canonical purine nucleotides from the nucleotide pool, thus preventing their incorporation into DNA/RNA and avoiding chromosomal lesions. In Yersinia pseudotuberculosis serotype I (strain IP32953), this protein is dITP/XTP pyrophosphatase.